The sequence spans 91 residues: Small ribosomal subunit protein uS19 (91 aa).

The protein belongs to the universal ribosomal protein uS19 family.

Protein S19 forms a complex with S13 that binds strongly to the 16S ribosomal RNA. The protein is Small ribosomal subunit protein uS19 of Prochlorococcus marinus subsp. pastoris (strain CCMP1986 / NIES-2087 / MED4).